The primary structure comprises 391 residues: Na(+)/H(+) antiporter NhaA (391 aa).

11 helical membrane-spanning segments follow: residues 14-34 (AGGI…NSPL), 59-79 (LLLW…GLEV), 95-115 (SLPS…YLLF), 124-144 (AGWA…MALL), 154-174 (VFLL…IALF), 177-197 (SDLS…LVGL), 213-233 (LILW…GVII), 261-281 (FLIL…NMSL), 290-310 (IGIA…FSFI), 328-348 (IAPV…IASL), and 363-383 (LGTL…LSKV).

Belongs to the NhaA Na(+)/H(+) (TC 2.A.33) antiporter family.

Its subcellular location is the cell inner membrane. The catalysed reaction is Na(+)(in) + 2 H(+)(out) = Na(+)(out) + 2 H(+)(in). Its function is as follows. Na(+)/H(+) antiporter that extrudes sodium in exchange for external protons. This Shewanella putrefaciens (strain CN-32 / ATCC BAA-453) protein is Na(+)/H(+) antiporter NhaA.